A 281-amino-acid chain; its full sequence is NADPH-dependent 7-cyano-7-deazaguanine reductase (281 aa).

Position 87 to 89 (87 to 89 (VES)) interacts with substrate. 89–90 (SK) is a binding site for NADPH. Cysteine 188 functions as the Thioimide intermediate in the catalytic mechanism. Catalysis depends on aspartate 195, which acts as the Proton donor. 227–228 (HE) provides a ligand contact to substrate. 256–257 (RG) provides a ligand contact to NADPH.

The protein belongs to the GTP cyclohydrolase I family. QueF type 2 subfamily. In terms of assembly, homodimer.

Its subcellular location is the cytoplasm. The catalysed reaction is 7-aminomethyl-7-carbaguanine + 2 NADP(+) = 7-cyano-7-deazaguanine + 2 NADPH + 3 H(+). The protein operates within tRNA modification; tRNA-queuosine biosynthesis. Its function is as follows. Catalyzes the NADPH-dependent reduction of 7-cyano-7-deazaguanine (preQ0) to 7-aminomethyl-7-deazaguanine (preQ1). This Aliivibrio fischeri (strain ATCC 700601 / ES114) (Vibrio fischeri) protein is NADPH-dependent 7-cyano-7-deazaguanine reductase.